Reading from the N-terminus, the 79-residue chain is Exodeoxyribonuclease 7 small subunit (79 aa).

This sequence belongs to the XseB family. In terms of assembly, heterooligomer composed of large and small subunits.

The protein resides in the cytoplasm. The enzyme catalyses Exonucleolytic cleavage in either 5'- to 3'- or 3'- to 5'-direction to yield nucleoside 5'-phosphates.. Bidirectionally degrades single-stranded DNA into large acid-insoluble oligonucleotides, which are then degraded further into small acid-soluble oligonucleotides. The chain is Exodeoxyribonuclease 7 small subunit from Syntrophus aciditrophicus (strain SB).